The sequence spans 945 residues: Nonsense-mediated mRNA decay factor SMG8 (945 aa).

Disordered regions lie at residues Arg-563 to Glu-604 and Ala-633 to Ala-671.

It belongs to the SMG8 family.

In terms of biological role, involved in nonsense-mediated decay (NMD) of mRNAs containing premature stop codons. Probable component of kinase complex containing nonC and recruited to stalled ribosomes. The protein is Nonsense-mediated mRNA decay factor SMG8 of Drosophila grimshawi (Hawaiian fruit fly).